The chain runs to 529 residues: Bifunctional purine biosynthesis protein PurH (529 aa).

An MGS-like domain is found at 1–148; the sequence is MNNARPIRRA…KNHKDVVIVV (148 aa).

The protein belongs to the PurH family.

The catalysed reaction is (6R)-10-formyltetrahydrofolate + 5-amino-1-(5-phospho-beta-D-ribosyl)imidazole-4-carboxamide = 5-formamido-1-(5-phospho-D-ribosyl)imidazole-4-carboxamide + (6S)-5,6,7,8-tetrahydrofolate. It carries out the reaction IMP + H2O = 5-formamido-1-(5-phospho-D-ribosyl)imidazole-4-carboxamide. It functions in the pathway purine metabolism; IMP biosynthesis via de novo pathway; 5-formamido-1-(5-phospho-D-ribosyl)imidazole-4-carboxamide from 5-amino-1-(5-phospho-D-ribosyl)imidazole-4-carboxamide (10-formyl THF route): step 1/1. It participates in purine metabolism; IMP biosynthesis via de novo pathway; IMP from 5-formamido-1-(5-phospho-D-ribosyl)imidazole-4-carboxamide: step 1/1. In Shewanella amazonensis (strain ATCC BAA-1098 / SB2B), this protein is Bifunctional purine biosynthesis protein PurH.